The following is a 451-amino-acid chain: MRVLFAVFSLIMACQAYDAVLFSNSREIGGTPAAKLVESATAEEPVVFIVNPDFTLGQFSVKANAYTSEPSADYLAKSVKNSNFHESQYFSHQIEATQAQWLSSADQYSAGSPIYIIYGEEWTSMEQLAEQLISKIDNSVGIITSTDAVAHEKSSRVKRVATDEFNSDSENSAAAEANGGFPFPLVIPPYNQTFYSVKPTNGHSCLFYLEGLTVVVEQKKEKVLYYANAYIPGSNFTWAYSETDVTCPNGTIGDFIFKIHLTLENDITGMQGTSKKAFTMKKGDKIDFDLTFTGDLFGYWALNKASASNLAISGYDPYKSASVDGSKVVNGSATQYTKLNSVAGWSLACGQSQAVFFPTNEQSVRIGVALMNTQIQLFNYQNPEKWVESAHFTLQTEDCTGTFSSGSWMGIVSALVLIAGLMFGYVMLQSVQTMDRFDDPKQRQIVINVRE.

The N-terminal stretch at 1–16 (MRVLFAVFSLIMACQA) is a signal peptide. The Lumenal segment spans residues 17-407 (YDAVLFSNSR…DCTGTFSSGS (391 aa)). Asn-191, Asn-235, Asn-249, and Asn-330 each carry an N-linked (GlcNAc...) asparagine glycan. A helical membrane pass occupies residues 408 to 428 (WMGIVSALVLIAGLMFGYVML). The Cytoplasmic portion of the chain corresponds to 429 to 451 (QSVQTMDRFDDPKQRQIVINVRE).

This sequence belongs to the vacuolar ATPase subunit S1 family. Accessory component of the multisubunit proton-transporting vacuolar (V)-ATPase protein pump. Expressed in pharynx, hypodermis, intestine, vulval hypodermis and the H-shape excretory cell.

Its subcellular location is the membrane. Its function is as follows. Accessory subunit of the proton-transporting vacuolar (V)-ATPase protein pump, which is required for luminal acidification of secretory vesicles. In the germline, required for the trafficking of the receptor RME-2 to the oocyte cell membrane where it regulates the uptake of yolk proteins. Also, plays an essential role in osmoregulation in the embryo, probably by regulating the proper formation of the eggshell. The sequence is that of V-type proton ATPase subunit S1 from Caenorhabditis elegans.